A 148-amino-acid polypeptide reads, in one-letter code: Large ribosomal subunit protein uL15 (148 aa).

The segment at 1-51 (MNLSNLKPAEGSTKTRKRIGRGPGSGLGGTSTRGHKGAKSRSGYSKKIGFE) is disordered. A compositionally biased stretch (gly residues) spans 21–31 (RGPGSGLGGTS).

This sequence belongs to the universal ribosomal protein uL15 family. Part of the 50S ribosomal subunit.

In terms of biological role, binds to the 23S rRNA. In Phocaeicola vulgatus (strain ATCC 8482 / DSM 1447 / JCM 5826 / CCUG 4940 / NBRC 14291 / NCTC 11154) (Bacteroides vulgatus), this protein is Large ribosomal subunit protein uL15.